A 586-amino-acid chain; its full sequence is Putative butyrophilin subfamily 2 member A3 (586 aa).

A signal peptide spans 1–27 (MEPAAALHFSRPASLLLLLSLCALVSA). The Ig-like V-type domain maps to 28–139 (QVTVVGPTDP…SCNEAILHLV (112 aa)). At 28-246 (QVTVVGPTDP…SFMPSRSPCV (219 aa)) the chain is on the extracellular side. 4 N-linked (GlcNAc...) asparagine glycosylation sites follow: asparagine 45, asparagine 112, asparagine 214, and asparagine 220. A disulfide bridge connects residues cysteine 50 and cysteine 123. A helical membrane pass occupies residues 247-267 (VILPVIMIILMIPIAICIYWI). The Cytoplasmic segment spans residues 268–586 (NNLQKEKKDS…VPQLPARKKV (319 aa)). The 194-residue stretch at 281–474 (TFNLCLSLAG…ILICSAFTGA (194 aa)) folds into the B30.2/SPRY domain.

The protein belongs to the immunoglobulin superfamily. BTN/MOG family.

The protein resides in the membrane. This chain is Putative butyrophilin subfamily 2 member A3 (BTN2A3P), found in Homo sapiens (Human).